The following is an 851-amino-acid chain: Probable disease resistance protein At1g15890 (851 aa).

Residues 139-441 (AEKIPAPKVE…CEGFIDGNED (303 aa)) form the NB-ARC domain. 181–188 (GMGGVGKT) is a binding site for ATP. 5 LRR repeats span residues 514–535 (SLRRMSLMCNQIANISSSSNSP), 536–557 (NLSTLLLQNNKLVHISCDFFRF), 560–582 (ALVVLDLSRNSSLSSLPEAISKL), 584–605 (SLQYINLSTTGIKWLPVSFKEL), and 607–629 (KLIHLNLEFTDELESIVGIATSL).

Belongs to the disease resistance NB-LRR family.

Its function is as follows. Probable disease resistance protein. The polypeptide is Probable disease resistance protein At1g15890 (Arabidopsis thaliana (Mouse-ear cress)).